The chain runs to 215 residues: Probable nicotinate-nucleotide adenylyltransferase (215 aa).

The protein belongs to the NadD family.

The enzyme catalyses nicotinate beta-D-ribonucleotide + ATP + H(+) = deamido-NAD(+) + diphosphate. It functions in the pathway cofactor biosynthesis; NAD(+) biosynthesis; deamido-NAD(+) from nicotinate D-ribonucleotide: step 1/1. Functionally, catalyzes the reversible adenylation of nicotinate mononucleotide (NaMN) to nicotinic acid adenine dinucleotide (NaAD). In Gluconacetobacter diazotrophicus (strain ATCC 49037 / DSM 5601 / CCUG 37298 / CIP 103539 / LMG 7603 / PAl5), this protein is Probable nicotinate-nucleotide adenylyltransferase.